The chain runs to 254 residues: Triosephosphate isomerase (254 aa).

Substrate is bound at residue asparagine 10–lysine 12. Histidine 96 functions as the Electrophile in the catalytic mechanism. Glutamate 168 acts as the Proton acceptor in catalysis. Substrate-binding positions include glycine 174, serine 214, and glycine 235–glycine 236.

It belongs to the triosephosphate isomerase family. As to quaternary structure, homodimer.

The protein resides in the cytoplasm. The catalysed reaction is D-glyceraldehyde 3-phosphate = dihydroxyacetone phosphate. The protein operates within carbohydrate biosynthesis; gluconeogenesis. It functions in the pathway carbohydrate degradation; glycolysis; D-glyceraldehyde 3-phosphate from glycerone phosphate: step 1/1. Functionally, involved in the gluconeogenesis. Catalyzes stereospecifically the conversion of dihydroxyacetone phosphate (DHAP) to D-glyceraldehyde-3-phosphate (G3P). The polypeptide is Triosephosphate isomerase (Rhodopirellula baltica (strain DSM 10527 / NCIMB 13988 / SH1)).